Here is a 320-residue protein sequence, read N- to C-terminus: Delta-aminolevulinic acid dehydratase (320 aa).

Zn(2+) is bound by residues C119, C121, and C129. K194 functions as the Schiff-base intermediate with substrate in the catalytic mechanism. Positions 204 and 216 each coordinate 5-aminolevulinate. A Mg(2+)-binding site is contributed by E232. The active-site Schiff-base intermediate with substrate is the K247. S273 is a binding site for 5-aminolevulinate.

Belongs to the ALAD family. As to quaternary structure, homooctamer. Zn(2+) is required as a cofactor.

It carries out the reaction 2 5-aminolevulinate = porphobilinogen + 2 H2O + H(+). It functions in the pathway porphyrin-containing compound metabolism; protoporphyrin-IX biosynthesis; coproporphyrinogen-III from 5-aminolevulinate: step 1/4. Functionally, catalyzes an early step in the biosynthesis of tetrapyrroles. Binds two molecules of 5-aminolevulinate per subunit, each at a distinct site, and catalyzes their condensation to form porphobilinogen. This chain is Delta-aminolevulinic acid dehydratase (hemB), found in Methanothermus sociabilis.